The following is a 142-amino-acid chain: Large ribosomal subunit protein uL13 (142 aa).

It belongs to the universal ribosomal protein uL13 family. In terms of assembly, part of the 50S ribosomal subunit.

Its function is as follows. This protein is one of the early assembly proteins of the 50S ribosomal subunit, although it is not seen to bind rRNA by itself. It is important during the early stages of 50S assembly. The sequence is that of Large ribosomal subunit protein uL13 from Alcanivorax borkumensis (strain ATCC 700651 / DSM 11573 / NCIMB 13689 / SK2).